The primary structure comprises 485 residues: uncharacterized protein (485 aa).

A signal peptide spans 1–23; it reads MRRRVCTVVRAVVCLLSTSLLTT. Cys24 carries the N-palmitoyl cysteine lipid modification. Cys24 is lipidated: S-diacylglycerol cysteine. Over residues 308–327 the composition is skewed to low complexity; that stretch reads SAASSPAQCPSSPSSSSSSS. A disordered region spans residues 308 to 331; that stretch reads SAASSPAQCPSSPSSSSSSSTNAG.

This sequence belongs to the TP013X lipoprotein family.

It localises to the cell membrane. This is an uncharacterized protein from Treponema pallidum (strain Nichols).